We begin with the raw amino-acid sequence, 207 residues long: Large ribosomal subunit protein uL4 (207 aa).

Residues 48–85 are disordered; it reads THKVKNRSEVRGGGRKPWRQKGTGRARQGSIRSPQWRG. Residues 60–71 show a composition bias toward basic residues; the sequence is GGRKPWRQKGTG.

This sequence belongs to the universal ribosomal protein uL4 family. In terms of assembly, part of the 50S ribosomal subunit.

One of the primary rRNA binding proteins, this protein initially binds near the 5'-end of the 23S rRNA. It is important during the early stages of 50S assembly. It makes multiple contacts with different domains of the 23S rRNA in the assembled 50S subunit and ribosome. In terms of biological role, forms part of the polypeptide exit tunnel. This Bacillus subtilis (strain 168) protein is Large ribosomal subunit protein uL4.